Consider the following 67-residue polypeptide: Conotoxin LeDr192 (67 aa).

The N-terminal stretch at 1 to 19 (MRCFPVFIILLLLIASAPC) is a signal peptide. A propeptide spanning residues 20 to 49 (FDARTKTDDDVPLSPLRDNLKRTIRTRLNI) is cleaved from the precursor. Position 65 is a threonine amide (Thr-65).

The protein belongs to the conotoxin T superfamily. Contains 2 disulfide bonds that can be either 'C1-C3, C2-C4' or 'C1-C4, C2-C3', since these disulfide connectivities have been observed for conotoxins with cysteine framework V (for examples, see AC P0DQQ7 and AC P81755). In terms of tissue distribution, expressed by the venom duct.

The protein resides in the secreted. In Conus litteratus (Lettered cone), this protein is Conotoxin LeDr192.